Reading from the N-terminus, the 272-residue chain is Tryptophan synthase alpha chain (272 aa).

Residues glutamate 49 and glutamate 60 each act as proton acceptor in the active site.

Belongs to the TrpA family. As to quaternary structure, tetramer of two alpha and two beta chains.

It carries out the reaction (1S,2R)-1-C-(indol-3-yl)glycerol 3-phosphate + L-serine = D-glyceraldehyde 3-phosphate + L-tryptophan + H2O. Its pathway is amino-acid biosynthesis; L-tryptophan biosynthesis; L-tryptophan from chorismate: step 5/5. In terms of biological role, the alpha subunit is responsible for the aldol cleavage of indoleglycerol phosphate to indole and glyceraldehyde 3-phosphate. This chain is Tryptophan synthase alpha chain, found in Legionella pneumophila (strain Lens).